A 481-amino-acid chain; its full sequence is Ribosomal RNA small subunit methyltransferase F (481 aa).

S-adenosyl-L-methionine is bound by residues 125-131 (AAAPGSK), E149, D176, and D194. The Nucleophile role is filled by C247.

This sequence belongs to the class I-like SAM-binding methyltransferase superfamily. RsmB/NOP family.

The protein localises to the cytoplasm. The catalysed reaction is cytidine(1407) in 16S rRNA + S-adenosyl-L-methionine = 5-methylcytidine(1407) in 16S rRNA + S-adenosyl-L-homocysteine + H(+). Functionally, specifically methylates the cytosine at position 1407 (m5C1407) of 16S rRNA. This is Ribosomal RNA small subunit methyltransferase F from Psychromonas ingrahamii (strain DSM 17664 / CCUG 51855 / 37).